The following is a 507-amino-acid chain: ATP synthase subunit alpha (507 aa).

170 to 177 is an ATP binding site; the sequence is GDRQTGKT.

The protein belongs to the ATPase alpha/beta chains family. F-type ATPases have 2 components, CF(1) - the catalytic core - and CF(0) - the membrane proton channel. CF(1) has five subunits: alpha(3), beta(3), gamma(1), delta(1), epsilon(1). CF(0) has three main subunits: a(1), b(2) and c(9-12). The alpha and beta chains form an alternating ring which encloses part of the gamma chain. CF(1) is attached to CF(0) by a central stalk formed by the gamma and epsilon chains, while a peripheral stalk is formed by the delta and b chains.

The protein localises to the cell inner membrane. The enzyme catalyses ATP + H2O + 4 H(+)(in) = ADP + phosphate + 5 H(+)(out). Produces ATP from ADP in the presence of a proton gradient across the membrane. The alpha chain is a regulatory subunit. This Fervidobacterium nodosum (strain ATCC 35602 / DSM 5306 / Rt17-B1) protein is ATP synthase subunit alpha.